A 289-amino-acid polypeptide reads, in one-letter code: MTRLRAVLLATVIALLGACAAPTPPAEARRPMPAGQPTAGKAEVLWLGQAATRITTPGGKVIVVDPWLTTNPKTPPGFKQLSALGKVDLILVTHAHSDHLGDAPALARLTNAPIYNGGGLGQALVSLGMVPAAQAQRFGKSGTVMPFGPTGPRITAVHAEHSSELALKNPATGKDETHYGGEPVGYIIELENGFKIWHMGDTGLFGDMRLIGEVYKPDLVLIPIGGHFTMGPQEAAIAVRDLIRPRFAIPIHYQTSPQLSGTPEAFKAALGAGAAAGVIVPQPGEKVDF.

Belongs to the UPF0173 family.

In Cupriavidus necator (strain ATCC 17699 / DSM 428 / KCTC 22496 / NCIMB 10442 / H16 / Stanier 337) (Ralstonia eutropha), this protein is UPF0173 metal-dependent hydrolase H16_A2129.